We begin with the raw amino-acid sequence, 114 residues long: MSDDVALPLQFTEAAAKKVKSLIADEDNPNLKLRVYITGGGCSGFQYGFTFDDQVNEGDMTIEKQGVGLVVDPMSLQYLVGGAVDYTEGLEGSRFVVTNPNAKSTCGCGSSFSI.

The iron-sulfur cluster site is built by Cys-42, Cys-106, and Cys-108.

Belongs to the HesB/IscA family. Homodimer. It depends on iron-sulfur cluster as a cofactor.

Required for insertion of 4Fe-4S clusters for at least IspG. This chain is Iron-sulfur cluster insertion protein ErpA, found in Citrobacter koseri (strain ATCC BAA-895 / CDC 4225-83 / SGSC4696).